A 337-amino-acid chain; its full sequence is MAKGHRPRRGSLAYSPRKRSQSHIPRFRSWPESDAEPKLQGFAGYKVGMTHVIMIDDVKHSLTEGTEISVPVTIIETPAIRVAAIRAYGKDTYGEIAIAEAWTDVLDKDLSRRLKTAKNPDVNASLEKLETLVESGRANDIRLITYTLPSTLTGVPKKVPDVMETGVSGSDVKAKFEYAKTVLGTMVEISDVFDNGKIVDVAAITTGHGTQGPVKRWGINLMKNKHSRQGSLRQVGTLGPWTPAHVSWRVPQAGQMGYHQRTDYNKRILKMSSDVDEVNPAGGFVNYGLVRGNYILIKGSVPGPSKRLIRLREPTRSKVSSIGEPQIMHVSTQTLQG.

The segment at 1–32 (MAKGHRPRRGSLAYSPRKRSQSHIPRFRSWPE) is disordered.

The protein belongs to the universal ribosomal protein uL3 family. In terms of assembly, part of the 50S ribosomal subunit. Forms a cluster with proteins L14 and L24e.

Functionally, one of the primary rRNA binding proteins, it binds directly near the 3'-end of the 23S rRNA, where it nucleates assembly of the 50S subunit. This chain is Large ribosomal subunit protein uL3, found in Methanococcoides burtonii (strain DSM 6242 / NBRC 107633 / OCM 468 / ACE-M).